The primary structure comprises 434 residues: Glutamate-1-semialdehyde 2,1-aminomutase 1 (434 aa).

N6-(pyridoxal phosphate)lysine is present on lysine 270.

Belongs to the class-III pyridoxal-phosphate-dependent aminotransferase family. HemL subfamily. As to quaternary structure, homodimer. Requires pyridoxal 5'-phosphate as cofactor.

The protein resides in the cytoplasm. The catalysed reaction is (S)-4-amino-5-oxopentanoate = 5-aminolevulinate. The protein operates within porphyrin-containing compound metabolism; protoporphyrin-IX biosynthesis; 5-aminolevulinate from L-glutamyl-tRNA(Glu): step 2/2. The protein is Glutamate-1-semialdehyde 2,1-aminomutase 1 of Bacillus anthracis (strain A0248).